Reading from the N-terminus, the 616-residue chain is Leucine aminopeptidase (616 aa).

Substrate is bound by residues 128 to 130 (QCQ) and 282 to 286 (GGMEN). His309 lines the Zn(2+) pocket. Glu310 acts as the Proton acceptor in catalysis. Residues His313 and Glu332 each contribute to the Zn(2+) site. Tyr397 functions as the Proton donor in the catalytic mechanism. 566 to 568 (RMK) provides a ligand contact to substrate.

This sequence belongs to the peptidase M1 family. Zn(2+) is required as a cofactor.

It localises to the cytoplasm. It catalyses the reaction an epoxide + H2O = an ethanediol. Its function is as follows. Aminopeptidase that preferentially cleaves di- and tripeptides. Also has low epoxide hydrolase activity (in vitro). Can hydrolyze the epoxide leukotriene LTA(4) but it forms preferentially 5,6-dihydroxy-7,9,11,14-eicosatetraenoic acid rather than the cytokine leukotriene B(4) as the product compared to the homologous mammalian enzyme (in vitro). This chain is Leucine aminopeptidase (LKHA4), found in Arabidopsis thaliana (Mouse-ear cress).